A 142-amino-acid chain; its full sequence is Phosphoribosyl-AMP cyclohydrolase (142 aa).

Residue D85 participates in Mg(2+) binding. C86 is a Zn(2+) binding site. Residues D87 and D89 each coordinate Mg(2+). Positions 102 and 109 each coordinate Zn(2+). The tract at residues 120 to 142 is disordered; it reads GEPPTPVGAGERQPASGTADAAP.

The protein belongs to the PRA-CH family. In terms of assembly, homodimer. It depends on Mg(2+) as a cofactor. The cofactor is Zn(2+).

It is found in the cytoplasm. The catalysed reaction is 1-(5-phospho-beta-D-ribosyl)-5'-AMP + H2O = 1-(5-phospho-beta-D-ribosyl)-5-[(5-phospho-beta-D-ribosylamino)methylideneamino]imidazole-4-carboxamide. It participates in amino-acid biosynthesis; L-histidine biosynthesis; L-histidine from 5-phospho-alpha-D-ribose 1-diphosphate: step 3/9. Catalyzes the hydrolysis of the adenine ring of phosphoribosyl-AMP. In Acidothermus cellulolyticus (strain ATCC 43068 / DSM 8971 / 11B), this protein is Phosphoribosyl-AMP cyclohydrolase.